Here is a 167-residue protein sequence, read N- to C-terminus: Phospholipase A and acyltransferase 1 (167 aa).

Residues 1–138 (MAVNDCFSLT…GEGVSEQANR (138 aa)) are Cytoplasmic-facing. Positions 20 to 135 (LIEVFRPCYQ…LRYGEGVSEQ (116 aa)) constitute an LRAT domain. His-30 is an active-site residue. Cys-119 functions as the Acyl-thioester intermediate in the catalytic mechanism. Residues 139-159 (AIGTIGLVAAGIDIFTFLGLF) traverse the membrane as a helical segment. The Lumenal portion of the chain corresponds to 160–167 (PKRQGAKS).

This sequence belongs to the H-rev107 family.

The protein localises to the membrane. The protein resides in the cytoplasm. It is found in the nucleus. It catalyses the reaction a 1,2-diacyl-sn-glycero-3-phosphocholine + H2O = a 1-acyl-sn-glycero-3-phosphocholine + a fatty acid + H(+). The catalysed reaction is a 1,2-diacyl-sn-glycero-3-phosphocholine + H2O = a 2-acyl-sn-glycero-3-phosphocholine + a fatty acid + H(+). It carries out the reaction 1,2-dihexadecanoyl-sn-glycero-3-phosphocholine + H2O = 2-hexadecanoyl-sn-glycero-3-phosphocholine + hexadecanoate + H(+). The enzyme catalyses 1,2-dihexadecanoyl-sn-glycero-3-phosphocholine + H2O = 1-hexadecanoyl-sn-glycero-3-phosphocholine + hexadecanoate + H(+). It catalyses the reaction 1-hexadecanoyl-2-(5Z,8Z,11Z,14Z-eicosatetraenoyl)-sn-glycero-3-phosphoethanolamine + H2O = 2-(5Z,8Z,11Z,14Z)-eicosatetraenoyl-sn-glycero-3-phosphoethanolamine + hexadecanoate + H(+). The catalysed reaction is 1-hexadecanoyl-2-(5Z,8Z,11Z,14Z-eicosatetraenoyl)-sn-glycero-3-phosphoethanolamine + H2O = 1-hexadecanoyl-sn-glycero-3-phosphoethanolamine + (5Z,8Z,11Z,14Z)-eicosatetraenoate + H(+). It carries out the reaction 1,2-di-(9Z-octadecenoyl)-sn-glycero-3-phosphoethanolamine + 1,2-dihexadecanoyl-sn-glycero-3-phosphocholine = hexadecanoyl-sn-glycero-3-phosphocholine + N-hexadecanoyl-1,2-di-(9Z-octadecenoyl)-sn-glycero-3-phosphoethanolamine + H(+). The enzyme catalyses 1,2-dihexadecanoyl-sn-glycero-3-phosphocholine + a 2-acyl-sn-glycero-3-phosphocholine = a 1-hexadecanoyl-2-acyl-sn-glycero-3-phosphocholine + 2-hexadecanoyl-sn-glycero-3-phosphocholine. Exhibits both phospholipase A1/2 and acyltransferase activities. Shows phospholipase A1 (PLA1) and A2 (PLA2) activity, catalyzing the calcium-independent release of fatty acids from the sn-1 or sn-2 position of glycerophospholipids. Shows O-acyltransferase activity, catalyzing the transfer of a fatty acyl group from glycerophospholipid to the hydroxyl group of lysophospholipid. The sequence is that of Phospholipase A and acyltransferase 1 from Rattus norvegicus (Rat).